The sequence spans 448 residues: Trigger factor (448 aa).

A PPIase FKBP-type domain is found at 160–245; it reads GDMLLMKVES…IQEIREEKLP (86 aa).

The protein belongs to the FKBP-type PPIase family. Tig subfamily.

Its subcellular location is the cytoplasm. It catalyses the reaction [protein]-peptidylproline (omega=180) = [protein]-peptidylproline (omega=0). Involved in protein export. Acts as a chaperone by maintaining the newly synthesized protein in an open conformation. Functions as a peptidyl-prolyl cis-trans isomerase. The protein is Trigger factor of Dehalococcoides mccartyi (strain ATCC BAA-2266 / KCTC 15142 / 195) (Dehalococcoides ethenogenes (strain 195)).